A 160-amino-acid polypeptide reads, in one-letter code: Cytochrome b6-f complex subunit 4 (160 aa).

3 helical membrane passes run 36–56 (LLYV…GLAI), 95–115 (LLGV…PFIE), and 131–151 (TIFL…TMPI).

It belongs to the cytochrome b family. PetD subfamily. As to quaternary structure, the 4 large subunits of the cytochrome b6-f complex are cytochrome b6, subunit IV (17 kDa polypeptide, petD), cytochrome f and the Rieske protein, while the 4 small subunits are petG, petL, petM and petN. The complex functions as a dimer.

The protein resides in the plastid. The protein localises to the chloroplast thylakoid membrane. Functionally, component of the cytochrome b6-f complex, which mediates electron transfer between photosystem II (PSII) and photosystem I (PSI), cyclic electron flow around PSI, and state transitions. The polypeptide is Cytochrome b6-f complex subunit 4 (Porphyra purpurea (Red seaweed)).